We begin with the raw amino-acid sequence, 224 residues long: Peptidyl-prolyl cis-trans isomerase FKBP3 (224 aa).

Ala2 bears the N-acetylalanine mark. At Ser36 the chain carries Phosphoserine. Residues 89-102 (KLNEDKPKETKSEE) are compositionally biased toward basic and acidic residues. The tract at residues 89–111 (KLNEDKPKETKSEETLDEGPPKY) is disordered. At Lys99 the chain carries N6-acetyllysine. In terms of domain architecture, PPIase FKBP-type spans 128–224 (GDVVHCWYTG…TFEVELVDID (97 aa)). Position 152 is a phosphoserine (Ser152). Residue Lys170 is modified to N6-acetyllysine.

Belongs to the FKBP-type PPIase family.

The protein resides in the nucleus. The enzyme catalyses [protein]-peptidylproline (omega=180) = [protein]-peptidylproline (omega=0). Inhibited preferentially by rapamycin over FK506. FK506- and rapamycin-binding proteins (FKBPs) constitute a family of receptors for the two immunosuppressants which inhibit T-cell proliferation by arresting two distinct cytoplasmic signal transmission pathways. PPIases accelerate the folding of proteins. The polypeptide is Peptidyl-prolyl cis-trans isomerase FKBP3 (FKBP3) (Homo sapiens (Human)).